A 104-amino-acid polypeptide reads, in one-letter code: Naphthalene 1,2-dioxygenase system, ferredoxin component (104 aa).

Residues 6–101 (IEAVALSDIL…VKIENLRVMI (96 aa)) form the Rieske domain. Residues Cys45, His47, Cys64, and His67 each coordinate [2Fe-2S] cluster.

This sequence belongs to the bacterial ring-hydroxylating dioxygenase ferredoxin component family. The naphthalene dioxygenase (NDO) multicomponent enzyme system is composed of an electron transfer component and a dioxygenase component (iron sulfur protein (ISP)). The electron transfer component is composed of a ferredoxin reductase (NdoR) and a ferredoxin (NdoA), and the dioxygenase component is formed of a heterohexamer (trimer of heterodimers) of three large alpha subunits (NdoB) and three small beta subunits (NdoC). The cofactor is [2Fe-2S] cluster.

It functions in the pathway aromatic compound metabolism; naphthalene degradation. In terms of biological role, component of the naphthalene dioxygenase (NDO) multicomponent enzyme system which catalyzes the incorporation of both atoms of molecular oxygen into naphthalene to form cis-(1R,2S)-dihydroxy-1,2-dihydronaphthalene. Functions as an intermediate electron transfer protein via a specific interaction with iron sulfur protein components (ISP) (NdoB and NdoC). Also able to catalyze the cis-dihydroxylation of biphenyl and phenanthrene. This Pseudomonas putida (Arthrobacter siderocapsulatus) protein is Naphthalene 1,2-dioxygenase system, ferredoxin component.